Reading from the N-terminus, the 236-residue chain is Rab-like protein 3 (236 aa).

Residues 1-235 (MASLDRVKVL…GGGALKNFHC (235 aa)) are small GTPase-like. Residues 16–21 (GVGKSS), 148–150 (KLD), and 179–180 (DC) each bind GTP.

It belongs to the small GTPase superfamily. Rab family. As to quaternary structure, homodimer. Interacts with GPR89; the interaction stabilizes GPR89. Interacts with RAP1GDS1.

Required for KRAS signaling regulation and modulation of cell proliferation. Regulator of KRAS prenylation, and probably prenylation of other small GTPases. Required for lymphocyte development and function. Not required for myeloid cell development. The protein is Rab-like protein 3 (Rabl3) of Mus musculus (Mouse).